A 185-amino-acid polypeptide reads, in one-letter code: Large ribosomal subunit protein uL5 (185 aa).

It belongs to the universal ribosomal protein uL5 family. Part of the 50S ribosomal subunit; part of the 5S rRNA/L5/L18/L25 subcomplex. Contacts the 5S rRNA and the P site tRNA. Forms a bridge to the 30S subunit in the 70S ribosome.

In terms of biological role, this is one of the proteins that bind and probably mediate the attachment of the 5S RNA into the large ribosomal subunit, where it forms part of the central protuberance. In the 70S ribosome it contacts protein S13 of the 30S subunit (bridge B1b), connecting the 2 subunits; this bridge is implicated in subunit movement. Contacts the P site tRNA; the 5S rRNA and some of its associated proteins might help stabilize positioning of ribosome-bound tRNAs. In Protochlamydia amoebophila (strain UWE25), this protein is Large ribosomal subunit protein uL5.